Consider the following 433-residue polypeptide: Glutamate-1-semialdehyde 2,1-aminomutase (433 aa).

Lysine 273 carries the post-translational modification N6-(pyridoxal phosphate)lysine.

It belongs to the class-III pyridoxal-phosphate-dependent aminotransferase family. HemL subfamily. Homodimer. Pyridoxal 5'-phosphate is required as a cofactor.

It is found in the cytoplasm. It carries out the reaction (S)-4-amino-5-oxopentanoate = 5-aminolevulinate. It functions in the pathway porphyrin-containing compound metabolism; protoporphyrin-IX biosynthesis; 5-aminolevulinate from L-glutamyl-tRNA(Glu): step 2/2. It participates in porphyrin-containing compound metabolism; chlorophyll biosynthesis. This chain is Glutamate-1-semialdehyde 2,1-aminomutase, found in Gloeothece citriformis (strain PCC 7424) (Cyanothece sp. (strain PCC 7424)).